Reading from the N-terminus, the 213-residue chain is MEKTEIVRKYVEKLINSPINLTAYKDFDEAMAFLYLDSVLPVKSEDLGEFFLDIGTGGGVPGVFLSVEFDKKGLLVDSICKKVHFIQQTCKELGIKKVETLCARAEELKGKGDFFEKFDSAVSRAVSKIATVLELTAPYVKVGGKLLLYKGPGYNEELGQSVNAMKELGVKLSEVRRYSIRGKDRFLLVFEKISHTPDKYPRRIGIPEKRPIR.

S-adenosyl-L-methionine is bound by residues Gly55, 105-106, and Arg124; that span reads AE.

The protein belongs to the methyltransferase superfamily. RNA methyltransferase RsmG family.

It localises to the cytoplasm. In terms of biological role, specifically methylates the N7 position of a guanine in 16S rRNA. The polypeptide is Ribosomal RNA small subunit methyltransferase G (Fervidobacterium nodosum (strain ATCC 35602 / DSM 5306 / Rt17-B1)).